The following is a 185-amino-acid chain: Ribosome-recycling factor (185 aa).

A disordered region spans residues 144–164; sequence KEGEAGEDEVGRAEKDLDKTT.

This sequence belongs to the RRF family.

It is found in the cytoplasm. Its function is as follows. Responsible for the release of ribosomes from messenger RNA at the termination of protein biosynthesis. May increase the efficiency of translation by recycling ribosomes from one round of translation to another. The polypeptide is Ribosome-recycling factor (Mycobacterium tuberculosis (strain CDC 1551 / Oshkosh)).